The primary structure comprises 663 residues: Protein KINESIN LIGHT CHAIN-RELATED 2 (663 aa).

Residues 1 to 14 are compositionally biased toward basic and acidic residues; that stretch reads MDVGESNERVKDDS. 2 disordered regions span residues 1–24 and 86–146; these read MDVGESNERVKDDSALQASPRSPL and GESK…KVSV. A Phosphoserine modification is found at Ser-19. Basic and acidic residues predominate over residues 86–100; sequence GESKKEIILEKKEES. The segment covering 102 to 111 has biased composition (polar residues); it reads GEGSLSQKKP. TPR repeat units follow at residues 147 to 181, 200 to 233, 243 to 276, 285 to 318, 329 to 363, 369 to 402, 411 to 444, 454 to 487, 495 to 528, 537 to 570, and 579 to 612; these read DEESPELGVVLLKQARELVSSGENLNKALDLALRA, VMSLHILAAIYAGLGRYNDAVPVLERSIEIPMIE, FAGCMQLGDMYGLMGQVENSIMLYTAGLEIQRQV, GETCRYLAEAHVQAMQFEEASRLCQMALDIHKEN, AADRKLMGLICDAKGDYEVALEHYVLASMAMSSQN, AAVDCSIGDAYMSLARFDEAIFAYQKALAVFKQG, ALVYVRLADLYNKIGKTRDSKSYCENALKIYLKP, ATGFIEISAIYQSMNELDQALKLLRRALKIYANA, AGIEAQMGVVTYMMGNYSESYDIFKSAISKFRNS, GIALNQMGLACVQRYAINEAADLFEEAKTILEKE, and LAVYSNLAGTYDAMGRLDDAIEILEYVVGTREEK.

This sequence belongs to the kinesin light chain family.

The chain is Protein KINESIN LIGHT CHAIN-RELATED 2 from Arabidopsis thaliana (Mouse-ear cress).